The chain runs to 125 residues: Small ribosomal subunit protein bS6m (125 aa).

This sequence belongs to the bacterial ribosomal protein bS6 family. Component of the mitochondrial small ribosomal subunit (mt-SSU). Mature mammalian 55S mitochondrial ribosomes consist of a small (28S) and a large (39S) subunit. The 28S small subunit contains a 12S ribosomal RNA (12S mt-rRNA) and 30 different proteins. The 39S large subunit contains a 16S rRNA (16S mt-rRNA), a copy of mitochondrial valine transfer RNA (mt-tRNA(Val)), which plays an integral structural role, and 52 different proteins.

Its subcellular location is the mitochondrion. This Homo sapiens (Human) protein is Small ribosomal subunit protein bS6m (MRPS6).